Reading from the N-terminus, the 464-residue chain is Uronate isomerase (464 aa).

It belongs to the metallo-dependent hydrolases superfamily. Uronate isomerase family.

It carries out the reaction D-glucuronate = D-fructuronate. The catalysed reaction is aldehydo-D-galacturonate = keto-D-tagaturonate. Its pathway is carbohydrate metabolism; pentose and glucuronate interconversion. In Caldicellulosiruptor saccharolyticus (strain ATCC 43494 / DSM 8903 / Tp8T 6331), this protein is Uronate isomerase.